The primary structure comprises 62 residues: Small ribosomal subunit protein uS14 (62 aa).

Zn(2+) is bound by residues cysteine 25, cysteine 28, cysteine 41, and cysteine 44.

It belongs to the universal ribosomal protein uS14 family. Zinc-binding uS14 subfamily. As to quaternary structure, part of the 30S ribosomal subunit. Contacts proteins S3 and S10. Requires Zn(2+) as cofactor.

Binds 16S rRNA, required for the assembly of 30S particles and may also be responsible for determining the conformation of the 16S rRNA at the A site. This is Small ribosomal subunit protein uS14 from Aquifex aeolicus (strain VF5).